We begin with the raw amino-acid sequence, 228 residues long: Aquaporin Z (228 aa).

2 helical membrane-spanning segments follow: residues 1 to 21 and 23 to 43; these read MLNKLSAEFFGTFWLVFGGCG and AILAAAFPELGIGFLGVALAF. The NPA 1 motif lies at 63–65; the sequence is NPA. 3 consecutive transmembrane segments (helical) span residues 82–102, 129–149, and 154–174; these read IPYWVAQVLGAIAAAAILYVI, MMAGLLIEIILTAFFIIIILG, and LAPAGFAPIAIGFGLTLIHLV. The short motif at 184-186 is the NPA 2 element; sequence NPA. Residues 205–225 form a helical membrane-spanning segment; sequence LFWVAPLVGAVIGAIIWKGLL.

The protein belongs to the MIP/aquaporin (TC 1.A.8) family. Homotetramer.

It localises to the cell inner membrane. It catalyses the reaction H2O(in) = H2O(out). In terms of biological role, channel that permits osmotically driven movement of water in both directions. It is involved in the osmoregulation and in the maintenance of cell turgor during volume expansion in rapidly growing cells. It mediates rapid entry or exit of water in response to abrupt changes in osmolarity. The sequence is that of Aquaporin Z from Brucella melitensis biotype 1 (strain ATCC 23456 / CCUG 17765 / NCTC 10094 / 16M).